The sequence spans 86 residues: UPF0291 protein LBA1279 (86 aa).

Composition is skewed to basic and acidic residues over residues 1–27 (MNKD…KENE) and 65–75 (NGKEVTSEKAK). Disordered stretches follow at residues 1–36 (MNKD…EEEE) and 65–86 (NGKE…LRKD). A compositionally biased stretch (basic residues) spans 76–86 (QAQRKKGLRKD).

The protein belongs to the UPF0291 family.

It is found in the cytoplasm. The sequence is that of UPF0291 protein LBA1279 from Lactobacillus acidophilus (strain ATCC 700396 / NCK56 / N2 / NCFM).